A 272-amino-acid chain; its full sequence is Phosphoglycolate phosphatase (272 aa).

The active-site Nucleophile is D19. Positions 19, 21, and 182 each coordinate Mg(2+).

The protein belongs to the HAD-like hydrolase superfamily. CbbY/CbbZ/Gph/YieH family. Mg(2+) serves as cofactor.

The enzyme catalyses 2-phosphoglycolate + H2O = glycolate + phosphate. The protein operates within organic acid metabolism; glycolate biosynthesis; glycolate from 2-phosphoglycolate: step 1/1. Specifically catalyzes the dephosphorylation of 2-phosphoglycolate. Is involved in the dissimilation of the intracellular 2-phosphoglycolate formed during the DNA repair of 3'-phosphoglycolate ends, a major class of DNA lesions induced by oxidative stress. This is Phosphoglycolate phosphatase from Pseudomonas putida (strain ATCC 47054 / DSM 6125 / CFBP 8728 / NCIMB 11950 / KT2440).